A 341-amino-acid chain; its full sequence is D-aspartate oxidase (341 aa).

Residues Asp-36, Arg-37, Thr-43, Ser-44, Met-50, Gly-307, Ile-311, and Ser-312 each coordinate FAD. A Microbody targeting signal motif is present at residues Ser-339–Leu-341.

The protein belongs to the DAMOX/DASOX family. Tetramer. Interacts with PEX5; the interaction is direct and required for localization of DDO to the peroxisome. FAD serves as cofactor. Expressed in liver and kidney (at protein level). In the brain, expressed in the frontal, temporal, and occipital lobes of the cortex, hippocampus, striatum, diencephalon, brainstem, cerebellum, spinal cord, plexus choroiderus and ependyma (at protein level). Also expressed in the lung, muscle, heart, spleen, small intestine and testis (at protein level).

Its subcellular location is the peroxisome matrix. It localises to the cytoplasm. It is found in the cytosol. It catalyses the reaction D-aspartate + O2 + H2O = oxaloacetate + H2O2 + NH4(+). It carries out the reaction D-glutamate + O2 + H2O = H2O2 + 2-oxoglutarate + NH4(+). Its activity is regulated as follows. Inhibited by aminooxyacetic acid, malonate, meso-tartrate and potassium bromide. Functionally, selectively catalyzes the oxidative deamination of acidic amino acids. Suppresses the level of D-aspartate in the brain, an amino acid that can act as an agonist for glutamate receptors. Protects the organism from the toxicity of D-amino acids. May also function in the intestine. In Rattus norvegicus (Rat), this protein is D-aspartate oxidase.